Reading from the N-terminus, the 71-residue chain is Equinin B (71 aa).

The N-terminal stretch at methionine 1–glycine 11 is a signal peptide. A propeptide spanning residues glycine 46–tyrosine 71 is cleaved from the precursor.

Contains 4 disulfide bonds.

It is found in the secreted. The protein resides in the target cell membrane. Antimicrobial peptide with inhibitory activity against both Gram-positive and Gram-negative bacteria (E.coli (MIC=0.25 ug/ml), M.lysodeikticus (MIC=0.25 ug/ml), and V.alginolyticus (MIC=0.25 ug/ml)). Does not show hemolytic activity. This is Equinin B from Actinia equina (Beadlet anemone).